We begin with the raw amino-acid sequence, 205 residues long: Orotate phosphoribosyltransferase (205 aa).

Glu-116–Ser-124 serves as a coordination point for 5-phospho-alpha-D-ribose 1-diphosphate. Residues Thr-120 and Arg-148 each coordinate orotate.

This sequence belongs to the purine/pyrimidine phosphoribosyltransferase family. PyrE subfamily. In terms of assembly, homodimer. Mg(2+) serves as cofactor.

The catalysed reaction is orotidine 5'-phosphate + diphosphate = orotate + 5-phospho-alpha-D-ribose 1-diphosphate. Its pathway is pyrimidine metabolism; UMP biosynthesis via de novo pathway; UMP from orotate: step 1/2. Its function is as follows. Catalyzes the transfer of a ribosyl phosphate group from 5-phosphoribose 1-diphosphate to orotate, leading to the formation of orotidine monophosphate (OMP). The protein is Orotate phosphoribosyltransferase of Wolinella succinogenes (strain ATCC 29543 / DSM 1740 / CCUG 13145 / JCM 31913 / LMG 7466 / NCTC 11488 / FDC 602W) (Vibrio succinogenes).